A 715-amino-acid chain; its full sequence is Fatty acid oxidation complex subunit alpha (715 aa).

The segment at Asn-8 to Pro-197 is enoyl-CoA hydratase. Positions Ala-313 to Ser-715 are 3-hydroxyacyl-CoA dehydrogenase.

The protein in the N-terminal section; belongs to the enoyl-CoA hydratase/isomerase family. It in the central section; belongs to the 3-hydroxyacyl-CoA dehydrogenase family. As to quaternary structure, heterotetramer of two alpha chains (FadJ) and two beta chains (FadI).

Its subcellular location is the cytoplasm. It catalyses the reaction a (3S)-3-hydroxyacyl-CoA = a (2E)-enoyl-CoA + H2O. The enzyme catalyses a 4-saturated-(3S)-3-hydroxyacyl-CoA = a (3E)-enoyl-CoA + H2O. It carries out the reaction a (3S)-3-hydroxyacyl-CoA + NAD(+) = a 3-oxoacyl-CoA + NADH + H(+). The catalysed reaction is (3S)-3-hydroxybutanoyl-CoA = (3R)-3-hydroxybutanoyl-CoA. It participates in lipid metabolism; fatty acid beta-oxidation. In terms of biological role, catalyzes the formation of a hydroxyacyl-CoA by addition of water on enoyl-CoA. Also exhibits 3-hydroxyacyl-CoA epimerase and 3-hydroxyacyl-CoA dehydrogenase activities. The sequence is that of Fatty acid oxidation complex subunit alpha from Photobacterium profundum (strain SS9).